The sequence spans 216 residues: Chaperone protein TorD (216 aa).

The protein belongs to the TorD/DmsD family. TorD subfamily.

The protein resides in the cytoplasm. Its function is as follows. Involved in the biogenesis of TorA. Acts on TorA before the insertion of the molybdenum cofactor and, as a result, probably favors a conformation of the apoenzyme that is competent for acquiring the cofactor. This is Chaperone protein TorD from Ferrimonas balearica (strain DSM 9799 / CCM 4581 / KCTC 23876 / PAT).